Reading from the N-terminus, the 142-residue chain is Large ribosomal subunit protein uL13 (142 aa).

It belongs to the universal ribosomal protein uL13 family. As to quaternary structure, part of the 50S ribosomal subunit.

Functionally, this protein is one of the early assembly proteins of the 50S ribosomal subunit, although it is not seen to bind rRNA by itself. It is important during the early stages of 50S assembly. The protein is Large ribosomal subunit protein uL13 of Yersinia pseudotuberculosis serotype O:1b (strain IP 31758).